Consider the following 101-residue polypeptide: CYC02 protein (101 aa).

A 1; approximate repeat occupies 42 to 64 (DAVCHHGCCRWFHHRCVRCCRSA). The 2 X approximate repeats stretch occupies residues 42–101 (DAVCHHGCCRWFHHRCVRCCRSAEEVSVSDTENNAAADAHCRHGCCRWFHGRCIRCCPSA). The 2; approximate repeat unit spans residues 79 to 101 (DAHCRHGCCRWFHGRCIRCCPSA).

Belongs to the GRP family.

Functionally, may be involved in the control of the cell cycle at the G1/S start transition. This Catharanthus roseus (Madagascar periwinkle) protein is CYC02 protein (CYC02).